Consider the following 239-residue polypeptide: Lipoprotein-releasing system ATP-binding protein LolD (239 aa).

The ABC transporter domain occupies 14 to 239; the sequence is IRAERLGKTY…KLRELAPSAV (226 aa). Residue 50-57 participates in ATP binding; the sequence is GASGAGKS.

This sequence belongs to the ABC transporter superfamily. Lipoprotein translocase (TC 3.A.1.125) family. The complex is composed of two ATP-binding proteins (LolD) and two transmembrane proteins (LolC and LolE).

The protein resides in the cell inner membrane. Functionally, part of the ABC transporter complex LolCDE involved in the translocation of mature outer membrane-directed lipoproteins, from the inner membrane to the periplasmic chaperone, LolA. Responsible for the formation of the LolA-lipoprotein complex in an ATP-dependent manner. In Xanthomonas campestris pv. campestris (strain 8004), this protein is Lipoprotein-releasing system ATP-binding protein LolD.